The chain runs to 2669 residues: Nucleosome-remodeling factor subunit NURF301 (2669 aa).

Residues 1-12 are compositionally biased toward basic residues; sequence MSGRGSRKRGRP. Residues 1–121 are required for function in nucleosome sliding; it reads MSGRGSRKRG…EEDKSDNEDD (121 aa). The interval 1–125 is disordered; that stretch reads MSGRGSRKRG…SDNEDDMLLT (125 aa). Positions 6–18 form a DNA-binding region, a.T hook; it reads SRKRGRPPKTPNE. Polar residues predominate over residues 38 to 56; it reads GKSQPSTPSASRGISPQSD. Ser40, Ser52, Ser55, Ser59, and Ser62 each carry phosphoserine. Residues 66–82 are compositionally biased toward basic residues; the sequence is HTNRSRGSAAKRGRGRK. Acidic residues predominate over residues 109–125; the sequence is GDSEEDKSDNEDDMLLT. The DDT domain maps to 188 to 248; it reads NTHVLRALSI…LKAILREEDA (61 aa). Residues 339–386 form a PHD-type 1 zinc finger; the sequence is DDHCRVCHRLGDLLCCETCPAVYHLECVDPPMNDVPTEDWQCGLCRSH. The stretch at 460–515 forms a coiled coil; the sequence is RLHSQITERRDEIERQMKLTETLTNEHKHTKRSVIEIEQEAKNELLEKEVLDEDEK. Positions 505-538 are disordered; sequence LEKEVLDEDEKDGDAKSESQSIEGTKKQEECKMV. Positions 528–537 are enriched in basic and acidic residues; the sequence is GTKKQEECKM. Residues 688–720 are a coiled coil; that stretch reads LQRITSAEREERKKLEKREKRERDDEEERNRLA. Disordered stretches follow at residues 1026 to 1048, 1135 to 1159, and 1406 to 1425; these read EGKR…AESE, TGLN…NQKS, and RSGL…EPQI. Ser1417 is modified (phosphoserine). Residue Thr1527 is modified to Phosphothreonine. The span at 1559–1590 shows a compositional bias: low complexity; the sequence is SRTGGANTAAAAASPTVGGSTSTQSNPSTSTP. Disordered regions lie at residues 1559–1596, 2181–2203, and 2283–2307; these read SRTG…VQII, INNG…ITTN, and TNEW…QTDD. The segment covering 2283–2293 has biased composition (polar residues); it reads TNEWETCSRGS. Positions 2338–2373 form a coiled coil; the sequence is KNDEVAELGEQKQSQLERHKELLKKNILRKRSLLER. A disordered region spans residues 2382-2432; that stretch reads DVKTKVQRHVRPLSNASPDEQSENERSGEPNLDFKRTEVQNPRHGAGRPKK. A phosphoserine mark is found at Ser2395, Ser2398, and Ser2403. Positions 2404-2419 are enriched in basic and acidic residues; it reads ENERSGEPNLDFKRTE. The PHD-type 2 zinc finger occupies 2481 to 2546; it reads EFICIDCKRA…EYVCPECQRK (66 aa). The Bromo domain maps to 2556 to 2660; the sequence is KLTSNDVEEL…SYFVQKIKNF (105 aa).

It belongs to the BPTF family. As to quaternary structure, component of the NURF complex composed of Caf1-55, E(bx), Nurf-38 and Iswi. Interacts with Trl. Interacts with histone H3-K4Me3.

It is found in the nucleus. Functionally, histone-binding component of NURF (nucleosome remodeling factor), a complex which catalyzes ATP-dependent nucleosome sliding and facilitates transcription of chromatin. Specifically recognizes H3 tails trimethylated on 'Lys-4' (H3K4me3), which mark transcription start sites of virtually all active genes. Required for homeotic gene expression, proper larval blood cell development, normal male X chromosome morphology, ecdysteroid signaling and metamorphosis. The protein is Nucleosome-remodeling factor subunit NURF301 (E(bx)) of Drosophila melanogaster (Fruit fly).